The chain runs to 268 residues: Putative carbamate hydrolase RutD (268 aa).

The 220-residue stretch at 24 to 243 (VILSAGLGGS…NATLDIAPWG (220 aa)) folds into the AB hydrolase-1 domain.

It belongs to the AB hydrolase superfamily. Hydrolase RutD family.

The enzyme catalyses carbamate + 2 H(+) = NH4(+) + CO2. Involved in pyrimidine catabolism. May facilitate the hydrolysis of carbamate, a reaction that can also occur spontaneously. The chain is Putative carbamate hydrolase RutD from Caulobacter sp. (strain K31).